The sequence spans 256 residues: Trypsinogen-like protein 3 (256 aa).

Positions 1 to 14 (MILLLVLALGLAGA) are cleaved as a signal peptide. The 223-residue stretch at 15-237 (SPLGEYKECP…YNDWIHQVMA (223 aa)) folds into the Peptidase S1 domain. 6 disulfide bridges follow: cysteine 23/cysteine 153, cysteine 41/cysteine 57, cysteine 125/cysteine 226, cysteine 132/cysteine 199, cysteine 164/cysteine 180, and cysteine 189/cysteine 213.

It belongs to the peptidase S1 family.

This is Trypsinogen-like protein 3 (trp3) from Pseudopleuronectes americanus (Winter flounder).